We begin with the raw amino-acid sequence, 486 residues long: Cardiolipin synthase A (486 aa).

The next 2 membrane-spanning stretches (helical) occupy residues 3–23 (TVYT…IAGV) and 38–58 (MAWL…YLAV). 2 consecutive PLD phosphodiesterase domains span residues 219–246 (MDLR…VDPR) and 399–426 (EGGL…DMRS). Catalysis depends on residues histidine 224, lysine 226, aspartate 231, histidine 404, lysine 406, and aspartate 411.

The protein belongs to the phospholipase D family. Cardiolipin synthase subfamily. ClsA sub-subfamily.

The protein resides in the cell inner membrane. It carries out the reaction 2 a 1,2-diacyl-sn-glycero-3-phospho-(1'-sn-glycerol) = a cardiolipin + glycerol. Catalyzes the reversible phosphatidyl group transfer from one phosphatidylglycerol molecule to another to form cardiolipin (CL) (diphosphatidylglycerol) and glycerol. The polypeptide is Cardiolipin synthase A (Shigella flexneri).